We begin with the raw amino-acid sequence, 372 residues long: Envelope phospholipase OPG057 (372 aa).

The YPPL signature appears at 153 to 156 (YPPL). S-palmitoyl cysteine; by host attachment occurs at residues cysteine 185 and cysteine 186. In terms of domain architecture, PLD phosphodiesterase spans 307-334 (FTIQNNTKLLIVDDEYVHITSANFDGTH).

It belongs to the orthopoxvirus OPG057 family. As to quaternary structure, interacts with protein OPG190/B5. Post-translationally, palmitoylated. Attachment of the palmitate moiety is essential for correct intracellular targeting and protein function.

It localises to the virion membrane. It is found in the host Golgi apparatus. The protein localises to the host trans-Golgi network. Its subcellular location is the host endoplasmic reticulum membrane. The catalysed reaction is a 1,2-diacyl-sn-glycero-3-phosphocholine + H2O = a 1,2-diacyl-sn-glycero-3-phosphate + choline + H(+). Its function is as follows. Major envelope protein that plays a role in the biogenesis of the viral double membrane and in egress of virus from the host cell. Produces the wrapped form of virus that is required for cell-to-cell spread. Acts as a lipase with broad specificity including phospholipase C, phospholipase A, and triacylglycerol lipase activities. The polypeptide is Envelope phospholipase OPG057 (OPG057) (Vaccinia virus (strain Western Reserve) (VACV)).